We begin with the raw amino-acid sequence, 432 residues long: Ribosomal protein uS12 methylthiotransferase RimO (432 aa).

One can recognise an MTTase N-terminal domain in the interval 1-112 (MKIGVVSLGC…ILNYLGLKEK (112 aa)). 6 residues coordinate [4Fe-4S] cluster: Cys10, Cys46, Cys75, Cys134, Cys138, and Cys141. Residues 120 to 350 (STPRSYAYLK…MAIQRGITRK (231 aa)) form the Radical SAM core domain. Residues 353–422 (EEFLGKEIEV…DYDLAGRDTE (70 aa)) form the TRAM domain.

The protein belongs to the methylthiotransferase family. RimO subfamily. Requires [4Fe-4S] cluster as cofactor.

It localises to the cytoplasm. It catalyses the reaction L-aspartate(89)-[ribosomal protein uS12]-hydrogen + (sulfur carrier)-SH + AH2 + 2 S-adenosyl-L-methionine = 3-methylsulfanyl-L-aspartate(89)-[ribosomal protein uS12]-hydrogen + (sulfur carrier)-H + 5'-deoxyadenosine + L-methionine + A + S-adenosyl-L-homocysteine + 2 H(+). Catalyzes the methylthiolation of an aspartic acid residue of ribosomal protein uS12. In Aquifex aeolicus (strain VF5), this protein is Ribosomal protein uS12 methylthiotransferase RimO.